The primary structure comprises 827 residues: Putative transcriptional regulatory protein C16G5.16 (827 aa).

Residues 16-42 (CDECHRRKIKCDQRRPCSNCIAYNYEC) constitute a DNA-binding region (zn(2)-C6 fungal-type). Disordered stretches follow at residues 80-114 (LKLPSFLAPPNDKDSPVNQSPWKRSDSSKRSSSQD), 158-193 (TVPNPVQESNSSSSQPDPLSFPYLPPTPAEDEHKKP), and 794-827 (QPPSMTNQVAYPTVRDGSNNSPDHPSSSNSKRTE). Basic and acidic residues predominate over residues 102 to 112 (KRSDSSKRSSS). Position 112 is a phosphoserine (serine 112). Composition is skewed to low complexity over residues 159–179 (VPNPVQESNSSSSQPDPLSFP) and 811–827 (SNNSPDHPSSSNSKRTE).

This sequence belongs to the ASG1 family.

It localises to the cytoplasm. Its subcellular location is the nucleus. This chain is Putative transcriptional regulatory protein C16G5.16, found in Schizosaccharomyces pombe (strain 972 / ATCC 24843) (Fission yeast).